Here is a 263-residue protein sequence, read N- to C-terminus: Auxin-responsive protein IAA3 (263 aa).

Disordered stretches follow at residues 1–54 (MSPP…RRPA) and 76–121 (RVFP…PAAK). A compositionally biased stretch (basic and acidic residues) spans 28–38 (RADDVDLKGTE). Positions 39 to 43 (LRLGL) match the EAR-like (transcriptional repression) motif. The PB1 domain occupies 158 to 245 (FLYVKVSMDG…SCRRLRIMKG (88 aa)).

This sequence belongs to the Aux/IAA family. In terms of assembly, homodimers and heterodimers. In terms of tissue distribution, highly expressed in flowers. Expressed in roots and shoots.

The protein resides in the nucleus. In terms of biological role, aux/IAA proteins are short-lived transcriptional factors that function as repressors of early auxin response genes at low auxin concentrations. In Oryza sativa subsp. japonica (Rice), this protein is Auxin-responsive protein IAA3 (IAA3).